Reading from the N-terminus, the 214-residue chain is Probable transaldolase (214 aa).

The active-site Schiff-base intermediate with substrate is the K83.

It belongs to the transaldolase family. Type 3B subfamily.

The protein resides in the cytoplasm. The catalysed reaction is D-sedoheptulose 7-phosphate + D-glyceraldehyde 3-phosphate = D-erythrose 4-phosphate + beta-D-fructose 6-phosphate. The protein operates within carbohydrate degradation; pentose phosphate pathway; D-glyceraldehyde 3-phosphate and beta-D-fructose 6-phosphate from D-ribose 5-phosphate and D-xylulose 5-phosphate (non-oxidative stage): step 2/3. Transaldolase is important for the balance of metabolites in the pentose-phosphate pathway. The sequence is that of Probable transaldolase from Desulfosudis oleivorans (strain DSM 6200 / JCM 39069 / Hxd3) (Desulfococcus oleovorans).